The chain runs to 162 residues: MWKVSALLFVLGSASLWVLAEGASTGQPEDDTETTGLEGGVAMPGAEDDVVTPGTSEDRYKSGLTTLVATSVNSVTGIRIEDLPTSESTVHAQEQSPSATASNVATSHSTEKVDGDTQTTVEKDGLSTVTLVGIIVGVLLAIGFIGAIIVVVMRKMSGRYSP.

The N-terminal stretch at 1 to 22 (MWKVSALLFVLGSASLWVLAEG) is a signal peptide. The interval 23 to 57 (ASTGQPEDDTETTGLEGGVAMPGAEDDVVTPGTSE) is disordered. Over 23 to 131 (ASTGQPEDDT…EKDGLSTVTL (109 aa)) the chain is Extracellular. Residues T25, T32, T34, T35, T52, T55, T65, T66, T76, and T85 are each glycosylated (O-linked (GalNAc...) threonine). A compositionally biased stretch (polar residues) spans 85 to 108 (TSESTVHAQEQSPSATASNVATSH). Positions 85-119 (TSESTVHAQEQSPSATASNVATSHSTEKVDGDTQT) are disordered. O-linked (GalNAc...) serine glycans are attached at residues S86 and S88. The O-linked (GalNAc...) threonine glycan is linked to T89. O-linked (GalNAc...) serine glycans are attached at residues S96 and S98. An O-linked (GalNAc...) threonine glycan is attached at T100. The O-linked (GalNAc...) serine glycan is linked to S102. T106 is a glycosylation site (O-linked (GalNAc...) threonine). O-linked (GalNAc...) serine glycosylation is found at S107 and S109. A compositionally biased stretch (basic and acidic residues) spans 109–119 (STEKVDGDTQT). O-linked (GalNAc...) threonine glycosylation is found at T110, T117, T119, and T120. A helical membrane pass occupies residues 132 to 152 (VGIIVGVLLAIGFIGAIIVVV). A requires for dimerization and lipid rafts association region spans residues 133–137 (GIIVG). The Cytoplasmic portion of the chain corresponds to 153–162 (MRKMSGRYSP). The segment at 154–155 (RK) is requires for interaction with MSN and EZR.

It belongs to the podoplanin family. As to quaternary structure, homodimer. Interacts with CLEC1B; the interaction is independent of CLEC1B glycosylation and activates CLEC1B; the interaction is dependent of sialic acid on O-glycans. Interacts with CD9; this interaction is homophilic and attenuates platelet aggregation and pulmonary metastasis induced by PDPN. Interacts with LGALS8; the interaction is glycosylation-dependent; may participate in connection of the lymphatic endothelium to the surrounding extracellular matrix. Interacts with HSPA9. Interacts (via extracellular domain) with CD44; this interaction is required for PDPN-mediated directional migration and regulation of lamellipodia extension/stabilization during cell spreading and migration. Interacts (via cytoplasmic domain) with MSN and EZR; activates RHOA and promotes epithelial-mesenchymal transition. Interacts with CCL21; relocalized PDPN to the basolateral membrane. Extensively O-glycosylated. Contains sialic acid residues. O-glycosylation is necessary for platelet aggregation activity. Disialylated at Thr-52; sialic acid is critical for platelet-aggregating activity and for CLEC1B interaction. In terms of processing, the N-terminus is blocked. Post-translationally, cleaved by a metalloprotease within its extracellular (EC) domain, generating a membrane-bound C-terminal fragment (PCTF33) and an extracellular fragment. The resulting membrane-bound C-terminal fragment (PCTF33) is further processed between Val-150 and Val-151 by PSEN1/gamma-secretase generating the intracellular domain of podoplanin (PICD). Highly expressed in placenta, lung, skeletal muscle and brain. Weakly expressed in brain, kidney and liver. In placenta, expressed on the apical plasma membrane of endothelium. In lung, expressed in alveolar epithelium. Up-regulated in colorectal tumors and expressed in 25% of early oral squamous cell carcinomas.

Its subcellular location is the membrane. It is found in the cell projection. The protein localises to the lamellipodium membrane. The protein resides in the filopodium membrane. It localises to the microvillus membrane. Its subcellular location is the ruffle membrane. It is found in the membrane raft. The protein localises to the apical cell membrane. The protein resides in the basolateral cell membrane. It localises to the invadopodium. Its subcellular location is the cytoplasm. It is found in the cytosol. Mediates effects on cell migration and adhesion through its different partners. During development plays a role in blood and lymphatic vessels separation by binding CLEC1B, triggering CLEC1B activation in platelets and leading to platelet activation and/or aggregation. Interaction with CD9, on the contrary, attenuates platelet aggregation induced by PDPN. Through MSN or EZR interaction promotes epithelial-mesenchymal transition (EMT) leading to ERZ phosphorylation and triggering RHOA activation leading to cell migration increase and invasiveness. Interaction with CD44 promotes directional cell migration in epithelial and tumor cells. In lymph nodes (LNs), controls fibroblastic reticular cells (FRCs) adhesion to the extracellular matrix (ECM) and contraction of the actomyosin by maintaining ERM proteins (EZR; MSN and RDX) and MYL9 activation through association with unknown transmembrane proteins. Engagement of CLEC1B by PDPN promotes FRCs relaxation by blocking lateral membrane interactions leading to reduction of ERM proteins (EZR; MSN and RDX) and MYL9 activation. Through binding with LGALS8 may participate in connection of the lymphatic endothelium to the surrounding extracellular matrix. In keratinocytes, induces changes in cell morphology showing an elongated shape, numerous membrane protrusions, major reorganization of the actin cytoskeleton, increased motility and decreased cell adhesion. Controls invadopodia stability and maturation leading to efficient degradation of the extracellular matrix (ECM) in tumor cells through modulation of RHOC activity in order to activate ROCK1/ROCK2 and LIMK1/LIMK2 and inactivation of CFL1. Required for normal lung cell proliferation and alveolus formation at birth. Does not function as a water channel or as a regulator of aquaporin-type water channels. Does not have any effect on folic acid or amino acid transport. In Homo sapiens (Human), this protein is Podoplanin.